The following is a 478-amino-acid chain: Protein nucleotidyltransferase YdiU (478 aa).

Positions 74, 76, 77, 97, 109, 110, 160, and 167 each coordinate ATP. Asp-236 serves as the catalytic Proton acceptor. Residues Asn-237 and Asp-246 each contribute to the Mg(2+) site. Asp-246 contributes to the ATP binding site.

The protein belongs to the SELO family. Requires Mg(2+) as cofactor. It depends on Mn(2+) as a cofactor.

The catalysed reaction is L-seryl-[protein] + ATP = 3-O-(5'-adenylyl)-L-seryl-[protein] + diphosphate. It carries out the reaction L-threonyl-[protein] + ATP = 3-O-(5'-adenylyl)-L-threonyl-[protein] + diphosphate. The enzyme catalyses L-tyrosyl-[protein] + ATP = O-(5'-adenylyl)-L-tyrosyl-[protein] + diphosphate. It catalyses the reaction L-histidyl-[protein] + UTP = N(tele)-(5'-uridylyl)-L-histidyl-[protein] + diphosphate. The catalysed reaction is L-seryl-[protein] + UTP = O-(5'-uridylyl)-L-seryl-[protein] + diphosphate. It carries out the reaction L-tyrosyl-[protein] + UTP = O-(5'-uridylyl)-L-tyrosyl-[protein] + diphosphate. In terms of biological role, nucleotidyltransferase involved in the post-translational modification of proteins. It can catalyze the addition of adenosine monophosphate (AMP) or uridine monophosphate (UMP) to a protein, resulting in modifications known as AMPylation and UMPylation. The polypeptide is Protein nucleotidyltransferase YdiU (Chromobacterium violaceum (strain ATCC 12472 / DSM 30191 / JCM 1249 / CCUG 213 / NBRC 12614 / NCIMB 9131 / NCTC 9757 / MK)).